The chain runs to 190 residues: Lysozyme g (190 aa).

The segment covering 1–10 (MPYGKIEDIK) has biased composition (basic and acidic residues). The tract at residues 1–31 (MPYGKIEDIKTSGASDVTAAQDGLKEGGWKS) is disordered. Catalysis depends on residues E71 and D84.

It belongs to the glycosyl hydrolase 23 family.

The catalysed reaction is Hydrolysis of (1-&gt;4)-beta-linkages between N-acetylmuramic acid and N-acetyl-D-glucosamine residues in a peptidoglycan and between N-acetyl-D-glucosamine residues in chitodextrins.. The polypeptide is Lysozyme g (Takifugu rubripes (Japanese pufferfish)).